The chain runs to 106 residues: Large ribosomal subunit protein eL42 (106 aa).

Belongs to the eukaryotic ribosomal protein eL42 family.

The chain is Large ribosomal subunit protein eL42 (RPL44) from Kluyveromyces lactis (strain ATCC 8585 / CBS 2359 / DSM 70799 / NBRC 1267 / NRRL Y-1140 / WM37) (Yeast).